The sequence spans 224 residues: Inner membrane-spanning protein YciB (224 aa).

Transmembrane regions (helical) follow at residues 20–40, 61–81, 86–106, 123–143, 156–176, and 187–207; these read GVNP…FFFA, IFVA…ASWL, LPIM…LTLY, LFGG…GYVF, KLTF…EVVW, and FKVW…MPLI.

Belongs to the YciB family.

Its subcellular location is the cell inner membrane. In terms of biological role, plays a role in cell envelope biogenesis, maintenance of cell envelope integrity and membrane homeostasis. The protein is Inner membrane-spanning protein YciB of Mesorhizobium japonicum (strain LMG 29417 / CECT 9101 / MAFF 303099) (Mesorhizobium loti (strain MAFF 303099)).